The following is a 345-amino-acid chain: Esterase (345 aa).

Residues 1–39 (MSSAMRKTTNSPVVRRLTAAAVALGSCLALAGPAGSAGA) form the signal peptide. Intrachain disulfides connect cysteine 73/cysteine 103, cysteine 156/cysteine 180, and cysteine 236/cysteine 294.

It is found in the secreted. This is Esterase (estA) from Streptomyces scabiei.